A 601-amino-acid chain; its full sequence is ATP-dependent RNA helicase DeaD (601 aa).

Positions 6–34 (STFSFLGLNPFIIKSLSKMGYVKPSPIQA) match the Q motif motif. The 172-residue stretch at 37-208 (IPLLLEGRDV…KRFMKNPQEI (172 aa)) folds into the Helicase ATP-binding domain. An ATP-binding site is contributed by 50-57 (AQTGSGKT). The DEAD box signature appears at 156–159 (DEAD). One can recognise a Helicase C-terminal domain in the interval 231-378 (KTDALIRFLE…EVQLPKIEVL (148 aa)). Over residues 564 to 581 (SIFNKDKNNKRRFSDNRL) the composition is skewed to basic and acidic residues. The tract at residues 564-601 (SIFNKDKNNKRRFSDNRLNKSSSIKNETKSSFFRRKSV) is disordered. A compositionally biased stretch (polar residues) spans 582–594 (NKSSSIKNETKSS).

The protein belongs to the DEAD box helicase family. DeaD/CsdA subfamily.

It is found in the cytoplasm. The enzyme catalyses ATP + H2O = ADP + phosphate + H(+). DEAD-box RNA helicase involved in various cellular processes at low temperature, including ribosome biogenesis, mRNA degradation and translation initiation. The protein is ATP-dependent RNA helicase DeaD of Buchnera aphidicola subsp. Schizaphis graminum (strain Sg).